Reading from the N-terminus, the 287-residue chain is MDTDASLLLGVEHEQKQQEELYQQLLLQTMGKLQSDSPPSKVIRPQPGLCVKTSSVSDKKKVFLNICQSQTVPPPPHLSQEALVELLESEDPTSYRVPMSLGEPHTEVDNSSQGCTVYDVVINDEFFQKCEKDTLFQQFLIAVSLEGLENKYSLELSRDIKILKNRKFMGSIAEQNIRTKSKPIIQEIDSKESLTLPSAAKRPEFTLLVEPPSGKAEHLIAEILLPGVSSARSLVLDLGEDRLVLIARPSLFHLDIFFPVLIDQENSVAQYNTNTQTLTVTMPVVSL.

Belongs to the PIH1 family.

The protein resides in the nucleus. In terms of biological role, involved in the assembly of C/D box small nucleolar ribonucleoprotein (snoRNP) particles. Recruits the SWI/SNF complex to the core promoter of rRNA genes and enhances pre-rRNA transcription. Mediates interaction of TELO2 with the R2TP complex which is necessary for the stability of MTOR and SMG1. Positively regulates the assembly and activity of the mTORC1 complex. The protein is PIH1 domain-containing protein 1 (pih1d1) of Danio rerio (Zebrafish).